Consider the following 207-residue polypeptide: Glycerol-3-phosphate acyltransferase (207 aa).

The next 5 helical transmembrane spans lie at V4–V24, I58–L78, E86–H106, I120–A140, and V162–I182.

The protein belongs to the PlsY family. As to quaternary structure, probably interacts with PlsX.

Its subcellular location is the cell inner membrane. It catalyses the reaction an acyl phosphate + sn-glycerol 3-phosphate = a 1-acyl-sn-glycero-3-phosphate + phosphate. It participates in lipid metabolism; phospholipid metabolism. Functionally, catalyzes the transfer of an acyl group from acyl-phosphate (acyl-PO(4)) to glycerol-3-phosphate (G3P) to form lysophosphatidic acid (LPA). This enzyme utilizes acyl-phosphate as fatty acyl donor, but not acyl-CoA or acyl-ACP. The protein is Glycerol-3-phosphate acyltransferase of Ralstonia pickettii (strain 12J).